The primary structure comprises 315 residues: Protein OPG185 (315 aa).

An N-terminal signal peptide occupies residues 1 to 16; it reads MTRLPILLLLISLVYA. Positions 17–121 constitute an Ig-like V-type domain; it reads TPFPQTSKKI…NDTDKVDYEE (105 aa). Residues 17 to 279 lie on the Virion surface side of the membrane; that stretch reads TPFPQTSKKI…SNYKTKDFVE (263 aa). C34 and C103 form a disulfide bridge. 4 N-linked (GlcNAc...) asparagine; by host glycosylation sites follow: N37, N69, N112, and N161. The segment at 194–213 is disordered; that stretch reads TVSATSGESTTDETPEPITD. Residue N254 is glycosylated (N-linked (GlcNAc...) asparagine; by host). A helical transmembrane segment spans residues 280-303; the sequence is IFGITALIILSAVAIFCITYYICN. At 304–315 the chain is on the intravirion side; the sequence is KRSRKYKTENKV.

It belongs to the orthopoxvirus OPG185 family. In terms of assembly, heterodimerizes with OPG040. The heterodimer OPG185-OPG040 interacts with components of the entry fusion complex OPG143 and OPG094. Heterodimer with C3/VPC protein; disulfide-linked. In terms of processing, glycosylated; contains phosphate and sulfate-substituted glycans. O-glycosylation is required for hemagglutination and hemadsorption activities of infected cell membranes.

Its subcellular location is the virion membrane. The protein resides in the host membrane. Its function is as follows. Prevents cell to cell fusion by interacting with and directing the viral OPG040 protein on the host plasma membrane. The OPG185-OPG040 complex associates with components of the entry fusion complex (EFC) presumably to avoid superinfection and syncytium formation. Via its interaction with C3/VCP protein, protects the infected cell and probably also the extracellular enveloped virus from complement attack. This is Protein OPG185 (OPG185) from Vaccinia virus (strain Copenhagen) (VACV).